The primary structure comprises 139 residues: Protein cornichon homolog 4 (139 aa).

Transmembrane regions (helical) follow at residues 5–25, 57–77, and 118–138; these read VFLF…YFII, IVTV…NLPV, and LGFY…ALIN.

This sequence belongs to the cornichon family. As to quaternary structure, interacts with Sec23/24 complex components SEC24B and SEC24D. Interacts with CCR5. Interacts with ADRB2 in the early secretory pathway.

Its subcellular location is the membrane. It localises to the endoplasmic reticulum. The protein resides in the endoplasmic reticulum-Golgi intermediate compartment. In terms of biological role, involved in G protein-coupled receptors (GPCRs) trafficking from the endoplasmic reticulum to the cell surface; it promotes the exit of GPCRs from the early secretory pathway, likely through interaction with the COPII machinery. The polypeptide is Protein cornichon homolog 4 (Cnih4) (Mus musculus (Mouse)).